Reading from the N-terminus, the 303-residue chain is Caspase-7 (303 aa).

The tract at residues 1–27 (MADDQNCAPELEKADPSGEDGVDAKPD) is disordered. An N-acetylalanine modification is found at A2. The propeptide at 2 to 23 (ADDQNCAPELEKADPSGEDGVD) is N-terminally processed. Residues 10–27 (ELEKADPSGEDGVDAKPD) show a composition bias toward basic and acidic residues. S30 is subject to Phosphoserine. Positions 38-41 (KKKK) are exosite. A loop L1 region spans residues 76–87 (KNFDKVTGMDVR). H144 is an active-site residue. At T173 the chain carries Phosphothreonine. The active site involves C186. The interval 187-196 (RGTELDDGVQ) is loop L2. A propeptide spanning residues 199 to 206 (SGPINETD) is cleaved from the precursor. Residues 226 to 238 (VPGYYSWRNPGKG) are loop L3. S239 is subject to Phosphoserine. Residues 274 to 288 (ESQCDDPCFNEKKQI) form a loop L4 region.

The protein belongs to the peptidase C14A family. In terms of assembly, heterotetramer that consists of two anti-parallel arranged heterodimers, each one formed by a 20 kDa (p20) and a 11 kDa (p11) subunit. Interacts with XIAP (via its second BIR domain); inhibiting CASP7 activity. Interacts with BIRC6/bruce. Interacts with ATXN3 (short isoform 1). Interacts with HSPA5. Post-translationally, cleavage by different proteases, such as granzyme B (GZMB), caspase-1 (CASP1), caspase-8 (CASP8) or caspase-9 (CASP9) generate the two active subunits. Its involvement in different programmed cell death processes is probably specified by the protease that activates CASP7. Cleaved and activated by initiator caspases (CASP8 and/or CASP9), leading to execution phase of apoptosis. Cleavage and maturation by GZMB regulates granzyme-mediated programmed cell death. Cleaved and activated by CASP1 in response to bacterial infection. Propeptide domains can also be cleaved efficiently by CASP3. Active heterodimers between the small subunit of caspase-7 and the large subunit of CASP3, and vice versa, also occur. Also cleaved at the N-terminus at alternative sites by CAPN1, leading to its activation. In terms of processing, phosphorylation at Ser-30 and Ser-239 by PAK2 inhibits its activity. Phosphorylation at Ser-30 prevents cleavage and activation by initiator caspase CASP9, while phosphorylation at Ser-239 prevents thiol protease activity by preventing substrate-binding. Ubiquitinated by BIRC6; this activity is inhibited by DIABLO/SMAC.

Its subcellular location is the cytoplasm. The protein localises to the cytosol. The protein resides in the nucleus. It localises to the secreted. It is found in the extracellular space. It catalyses the reaction Strict requirement for an Asp residue at position P1 and has a preferred cleavage sequence of Asp-Glu-Val-Asp-|-.. With respect to regulation, during activation, the N-terminal disordered prodomain is removed by cleavage. Concomitantly, double cleavage gives rise to a large Caspase-7 subunit p20 and a small Caspase-7 subunit p11. The two large and two small subunits then assemble to form the active CASP7 complex. Can be cleaved and activated by different caspases, depending on the context. Cleaved and activated by initiator caspases (CASP8 and/or CASP9), leading to execution phase of apoptosis. Cleavage and maturation by GZMB regulates granzyme-mediated programmed cell death. Cleavage and maturation by CASP1 regulates pyroptosis. Inhibited by XIAP, which directly binds to the active site pocket and obstructs substrate entry. Phosphorylation at Ser-30 and Ser-239 by PAK2 inhibits its activity. Inhibited by BIRC6; following inhibition of BIRC6-caspase binding by DIABLO/SMAC, BIRC6 is subjected to caspase cleavage, leading to an increase in active caspases. In terms of biological role, thiol protease involved in different programmed cell death processes, such as apoptosis, pyroptosis or granzyme-mediated programmed cell death, by proteolytically cleaving target proteins. Has a marked preference for Asp-Glu-Val-Asp (DEVD) consensus sequences, with some plasticity for alternate non-canonical sequences. Its involvement in the different programmed cell death processes is probably determined by upstream proteases that activate CASP7. Acts as an effector caspase involved in the execution phase of apoptosis: following cleavage and activation by initiator caspases (CASP8 and/or CASP9), mediates execution of apoptosis by catalyzing cleavage of proteins, such as CLSPN, PARP1, PTGES3 and YY1. Compared to CASP3, acts as a minor executioner caspase and cleaves a limited set of target proteins. Acts as a key regulator of the inflammatory response in response to bacterial infection by catalyzing cleavage and activation of the sphingomyelin phosphodiesterase SMPD1 in the extracellular milieu, thereby promoting membrane repair. Regulates pyroptosis in intestinal epithelial cells: cleaved and activated by CASP1 in response to S.typhimurium infection, promoting its secretion to the extracellular milieu, where it catalyzes activation of SMPD1, generating ceramides that repair membranes and counteract the action of gasdermin-D (GSDMD) pores. Regulates granzyme-mediated programmed cell death in hepatocytes: cleaved and activated by granzyme B (GZMB) in response to bacterial infection, promoting its secretion to the extracellular milieu, where it catalyzes activation of SMPD1, generating ceramides that repair membranes and counteract the action of perforin (PRF1) pores. Following cleavage by CASP1 in response to inflammasome activation, catalyzes processing and inactivation of PARP1, alleviating the transcription repressor activity of PARP1. Acts as an inhibitor of type I interferon production during virus-induced apoptosis by mediating cleavage of antiviral proteins CGAS, IRF3 and MAVS, thereby preventing cytokine overproduction. Cleaves and activates sterol regulatory element binding proteins (SREBPs). Cleaves phospholipid scramblase proteins XKR4, XKR8 and XKR9. Cleaves BIRC6 following inhibition of BIRC6-caspase binding by DIABLO/SMAC. This Mesocricetus auratus (Golden hamster) protein is Caspase-7 (CASP7).